A 552-amino-acid chain; its full sequence is HTH-type transcriptional regulator SgrR (552 aa).

The 116-residue stretch at 1 to 116 (MPSARLQQQF…LVSHLGRSFR (116 aa)) folds into the HTH marR-type domain. A DNA-binding region (H-T-H motif) is located at residues 26-49 (LNELAALLSCSRRHMRTLLNTMQD). Residues 163–492 (ELEADIAHHW…IDWQVDAARW (330 aa)) are solute-binding.

Its function is as follows. Activates the small RNA gene sgrS under glucose-phosphate stress conditions as well as yfdZ. Represses its own transcription under both stress and non-stress conditions. Might act as a sensor of the intracellular accumulation of phosphoglucose by binding these molecules in its C-terminal solute-binding domain. This chain is HTH-type transcriptional regulator SgrR, found in Escherichia coli O157:H7.